The primary structure comprises 140 residues: ATP synthase epsilon chain (140 aa).

The protein belongs to the ATPase epsilon chain family. F-type ATPases have 2 components, CF(1) - the catalytic core - and CF(0) - the membrane proton channel. CF(1) has five subunits: alpha(3), beta(3), gamma(1), delta(1), epsilon(1). CF(0) has three main subunits: a, b and c.

It is found in the cell inner membrane. Functionally, produces ATP from ADP in the presence of a proton gradient across the membrane. This is ATP synthase epsilon chain from Bdellovibrio bacteriovorus (strain ATCC 15356 / DSM 50701 / NCIMB 9529 / HD100).